We begin with the raw amino-acid sequence, 72 residues long: Translation initiation factor IF-1 (72 aa).

In terms of domain architecture, S1-like spans 1–72 (MSKEDSFEME…SKGRITYRAR (72 aa)).

This sequence belongs to the IF-1 family. Component of the 30S ribosomal translation pre-initiation complex which assembles on the 30S ribosome in the order IF-2 and IF-3, IF-1 and N-formylmethionyl-tRNA(fMet); mRNA recruitment can occur at any time during PIC assembly.

The protein localises to the cytoplasm. Functionally, one of the essential components for the initiation of protein synthesis. Stabilizes the binding of IF-2 and IF-3 on the 30S subunit to which N-formylmethionyl-tRNA(fMet) subsequently binds. Helps modulate mRNA selection, yielding the 30S pre-initiation complex (PIC). Upon addition of the 50S ribosomal subunit IF-1, IF-2 and IF-3 are released leaving the mature 70S translation initiation complex. The polypeptide is Translation initiation factor IF-1 (Pseudomonas syringae pv. tomato (strain ATCC BAA-871 / DC3000)).